Consider the following 462-residue polypeptide: 3-oxoacyl-[acyl-carrier-protein] synthase I, chloroplastic (462 aa).

The N-terminal 35 residues, Met-1–Ala-35, are a transit peptide targeting the chloroplast. The interval Met-1–Asp-45 is disordered. The span at Pro-19–Pro-29 shows a compositional bias: basic residues. The segment covering Ala-30–Ala-39 has biased composition (low complexity). The 413-residue stretch at Arg-47–Pro-459 folds into the Ketosynthase family 3 (KS3) domain. Active-site for beta-ketoacyl synthase activity residues include Cys-213, His-353, and His-389.

This sequence belongs to the thiolase-like superfamily. Beta-ketoacyl-ACP synthases family. Homodimer.

Its subcellular location is the plastid. The protein resides in the chloroplast. The enzyme catalyses a fatty acyl-[ACP] + malonyl-[ACP] + H(+) = a 3-oxoacyl-[ACP] + holo-[ACP] + CO2. Its function is as follows. Catalyzes the condensation reaction of fatty acid synthesis by the addition to an acyl acceptor of two carbons from malonyl-ACP. Specific for elongation from C-10 to unsaturated C-16 and C-18 fatty acids. The chain is 3-oxoacyl-[acyl-carrier-protein] synthase I, chloroplastic (KAS12) from Hordeum vulgare (Barley).